The primary structure comprises 1239 residues: Protein strawberry notch homolog 1 (1239 aa).

The tract at residues 684–837 (AQSNNNSPRD…SANSNTNSSF (154 aa)) is disordered. The span at 694–713 (SPCKENKIKKRKGEEVSREA) shows a compositional bias: basic and acidic residues. Residues 728 to 744 (DESESESDASDNEESDN) show a composition bias toward acidic residues. The span at 778 to 790 (KEHKKVKEKKKKK) shows a compositional bias: basic residues. A compositionally biased stretch (low complexity) spans 814 to 837 (FTSTVGTTTSSTNASANSNTNSSF). Residues 838–866 (VTSQDAVERAQQMKKELLDKLEKLAEDLP) adopt a coiled-coil conformation.

This sequence belongs to the SBNO family.

Its subcellular location is the nucleus. Plays a crucial role in the regulation of neural stem cells (NSCs) proliferation. Enhances the phosphorylation of GSK3B through the PI3K-Akt signaling pathway, thereby upregulating the Wnt/beta-catenin signaling pathway and promoting the proliferation of NSCs. This chain is Protein strawberry notch homolog 1 (SBNO1), found in Gallus gallus (Chicken).